A 459-amino-acid chain; its full sequence is Probable 1,4-beta-D-glucan cellobiohydrolase C (459 aa).

An N-terminal signal peptide occupies residues Met-1 to Ala-18. Residues Gln-19–Thr-54 form the CBM1 domain. 2 disulfides stabilise this stretch: Cys-26–Cys-43 and Cys-37–Cys-53. Residues Thr-54 to Thr-94 are thr-rich linker. Positions Val-76 to Ala-97 are disordered. The catalytic stretch occupies residues Ala-95–Phe-459. The active site involves Asp-189. A disulfide bridge links Cys-190 with Cys-249. The Proton donor role is filled by Asp-235. Asn-303 carries N-linked (GlcNAc...) asparagine glycosylation. Cys-381 and Cys-428 are oxidised to a cystine. The active-site Nucleophile is Asp-414.

Belongs to the glycosyl hydrolase 6 (cellulase B) family.

Its subcellular location is the secreted. The enzyme catalyses Hydrolysis of (1-&gt;4)-beta-D-glucosidic linkages in cellulose and cellotetraose, releasing cellobiose from the non-reducing ends of the chains.. Functionally, the biological conversion of cellulose to glucose generally requires three types of hydrolytic enzymes: (1) Endoglucanases which cut internal beta-1,4-glucosidic bonds; (2) Exocellobiohydrolases that cut the disaccharide cellobiose from the non-reducing end of the cellulose polymer chain; (3) Beta-1,4-glucosidases which hydrolyze the cellobiose and other short cello-oligosaccharides to glucose. This Aspergillus niger (strain ATCC MYA-4892 / CBS 513.88 / FGSC A1513) protein is Probable 1,4-beta-D-glucan cellobiohydrolase C (cbhC).